A 146-amino-acid polypeptide reads, in one-letter code: Large ribosomal subunit protein uL15 (146 aa).

A disordered region spans residues 1–46 (MKLHELQPAPGSRKKAVRVGRGIGSGNGKTAGRGHKGQKARSGGGV). Over residues 21–31 (RGIGSGNGKTA) the composition is skewed to gly residues.

The protein belongs to the universal ribosomal protein uL15 family. In terms of assembly, part of the 50S ribosomal subunit.

Binds to the 23S rRNA. This Geobacillus thermodenitrificans (strain NG80-2) protein is Large ribosomal subunit protein uL15.